A 1211-amino-acid chain; its full sequence is Homeodomain-interacting protein kinase 1 (1211 aa).

A Glycyl lysine isopeptide (Lys-Gly) (interchain with G-Cter in SUMO); alternate cross-link involves residue Lys-25. Residue Lys-25 forms a Glycyl lysine isopeptide (Lys-Gly) (interchain with G-Cter in SUMO2); alternate linkage. Residues Lys-120 and Lys-124 each participate in a glycyl lysine isopeptide (Lys-Gly) (interchain with G-Cter in SUMO2) cross-link. Positions 190–518 (YEVLEFLGRG…PLKTLNHQFV (329 aa)) constitute a Protein kinase domain. ATP is bound by residues 196-204 (LGRGTFGQV) and Lys-219. Asp-315 serves as the catalytic Proton acceptor. The tract at residues 835–856 (QQQSSSLPSRKNKQSAPVSSTS) is disordered. A Nuclear localization signal 1 (NLS1) motif is present at residues 844-847 (RKNK). Phosphoserine is present on Ser-872. Residues 885–1094 (PVQDQHQPII…FQHGSPLHST (210 aa)) form an interaction with TP53 region. The tract at residues 891 to 998 (QPIIIPDTPS…PLKTQLGDCT (108 aa)) is required for localization to nuclear speckles. The SUMO interaction motifs (SIM); required for nuclear localization and kinase activity stretch occupies residues 902 to 926 (PVSVITIRSDTDEEEDNKFKPSSSS). Lys-991 is covalently cross-linked (Glycyl lysine isopeptide (Lys-Gly) (interchain with G-Cter in SUMO2)). Disordered stretches follow at residues 1002–1023 (QASG…GQSS), 1047–1070 (LSQN…APRR), and 1085–1105 (FQHG…APAH). Composition is skewed to low complexity over residues 1048–1064 (SQNQ…ERSS) and 1096–1105 (HPHLAPAPAH). Ser-1201 is subject to Phosphoserine. Lys-1204 is covalently cross-linked (Glycyl lysine isopeptide (Lys-Gly) (interchain with G-Cter in SUMO)).

Belongs to the protein kinase superfamily. CMGC Ser/Thr protein kinase family. HIPK subfamily. Interacts with Nkx1-2, Nkx2-5, MYB, PARK7, DAXX and p53/TP53. Part of a cytoplasmic complex made of HIPK1, DAB2IP and MAP3K5 in response to TNF. This complex formation promotes MAP3K5-JNK activation and subsequent apoptosis. Post-translationally, phosphorylated and activated by JNK1. Autophosphorylated. Sumoylated. When conjugated it is directed to nuclear speckles. SENP1-mediated desumoylation is mediated by TNF in response to stress stimuli, triggering transient translocation from nucleus to cytoplasm.

Its subcellular location is the nucleus. The protein localises to the cytoplasm. The protein resides in the nucleus speckle. The enzyme catalyses L-seryl-[protein] + ATP = O-phospho-L-seryl-[protein] + ADP + H(+). It carries out the reaction L-threonyl-[protein] + ATP = O-phospho-L-threonyl-[protein] + ADP + H(+). In terms of biological role, serine/threonine-protein kinase involved in transcription regulation and TNF-mediated cellular apoptosis. Plays a role as a corepressor for homeodomain transcription factors. Phosphorylates DAXX and MYB. Phosphorylates DAXX in response to stress, and mediates its translocation from the nucleus to the cytoplasm. Inactivates MYB transcription factor activity by phosphorylation. Prevents MAP3K5-JNK activation in the absence of TNF. TNF triggers its translocation to the cytoplasm in response to stress stimuli, thus activating nuclear MAP3K5-JNK by derepression and promoting apoptosis. May be involved in anti-oxidative stress responses. Involved in the regulation of eye size, lens formation and retinal lamination during late embryogenesis. Promotes angiogenesis and to be involved in erythroid differentiation. May be involved in malignant squamous cell tumor formation. Phosphorylates PAGE4 at 'Thr-51' which is critical for the ability of PAGE4 to potentiate the transcriptional activator activity of JUN. This Rattus norvegicus (Rat) protein is Homeodomain-interacting protein kinase 1.